The sequence spans 266 residues: GTP cyclohydrolase MptA (266 aa).

The protein belongs to the GTP cyclohydrolase IV family. In terms of assembly, homodimer. Fe(2+) serves as cofactor.

It catalyses the reaction GTP + H2O = 7,8-dihydroneopterin 2',3'-cyclic phosphate + formate + diphosphate + H(+). Its pathway is cofactor biosynthesis; 5,6,7,8-tetrahydromethanopterin biosynthesis. Its function is as follows. Converts GTP to 7,8-dihydro-D-neopterin 2',3'-cyclic phosphate, the first intermediate in the biosynthesis of coenzyme methanopterin. The chain is GTP cyclohydrolase MptA from Pyrococcus abyssi (strain GE5 / Orsay).